Reading from the N-terminus, the 191-residue chain is Fe/S biogenesis protein NfuA (191 aa).

Positions 149 and 152 each coordinate [4Fe-4S] cluster.

Belongs to the NfuA family. Homodimer. [4Fe-4S] cluster serves as cofactor.

Involved in iron-sulfur cluster biogenesis. Binds a 4Fe-4S cluster, can transfer this cluster to apoproteins, and thereby intervenes in the maturation of Fe/S proteins. Could also act as a scaffold/chaperone for damaged Fe/S proteins. The polypeptide is Fe/S biogenesis protein NfuA (Yersinia enterocolitica serotype O:8 / biotype 1B (strain NCTC 13174 / 8081)).